Reading from the N-terminus, the 190-residue chain is CASP-like protein 1E1 (190 aa).

The disordered stretch occupies residues 1 to 21 (MEHESKTKMDGIEMEKGKKEN). Residues 1 to 28 (MEHESKTKMDGIEMEKGKKENGSRKGVE) are Cytoplasmic-facing. A helical transmembrane segment spans residues 29-49 (ITMRVLALVLTMVAATVLGVA). The Extracellular segment spans residues 50 to 83 (KQTEVVPIKLIPTLPPLNVATTAKASYLSAFVYN). The chain crosses the membrane as a helical span at residues 84-104 (ICANAIACGYTAISIMIVIIS). The Cytoplasmic segment spans residues 105-111 (KGRRSKC). The chain crosses the membrane as a helical span at residues 112-132 (LLMAVLIGDLMMVALLCSSTG). Residues 133–163 (AAGAIGLMGRHGNKHVMWKKVCGVFGKFCNQ) lie on the Extracellular side of the membrane. A helical transmembrane segment spans residues 164-184 (AAVSVAITLIASVVFMLLVVL). Residues 185–190 (DALKLP) are Cytoplasmic-facing.

Belongs to the Casparian strip membrane proteins (CASP) family. As to quaternary structure, homodimer and heterodimers.

The protein resides in the cell membrane. In Arabidopsis lyrata subsp. lyrata (Lyre-leaved rock-cress), this protein is CASP-like protein 1E1.